We begin with the raw amino-acid sequence, 144 residues long: Maximins 10/H3 (144 aa).

An N-terminal signal peptide occupies residues 1–18 (MNFKYIVAVSFLIASAYA). A propeptide spanning residues 19 to 43 (RSVKNDEQSLSQRDVLDEESLREFR) is cleaved from the precursor. The residue at position 70 (S70) is a Serine amide. The propeptide occupies 74–123 (TAEDHEVMKRLEAVMRDLDSLDYPEEATERETRGFNQEEIANLFTKKEKR). An Isoleucine amide modification is found at I143.

The protein belongs to the bombinin family. Expressed by the skin glands.

Its subcellular location is the secreted. Functionally, maximin-10 shows antimicrobial activity against bacteria and against the fungus C.albicans. It has little hemolytic activity. Its function is as follows. Maximin-H3 shows antibacterial activity against both Gram-positive and Gram-negative bacteria. It also shows antimicrobial activity against the fungus C.albicans. Shows strong hemolytic activity. The sequence is that of Maximins 10/H3 from Bombina maxima (Giant fire-bellied toad).